Here is a 390-residue protein sequence, read N- to C-terminus: Imidazolonepropionase (390 aa).

Fe(3+) is bound by residues His71 and His73. 2 residues coordinate Zn(2+): His71 and His73. Positions 80, 138, and 165 each coordinate 4-imidazolone-5-propanoate. Tyr138 contributes to the N-formimidoyl-L-glutamate binding site. Fe(3+) is bound at residue His228. His228 provides a ligand contact to Zn(2+). Gln231 serves as a coordination point for 4-imidazolone-5-propanoate. Asp302 is a binding site for Fe(3+). Asp302 lines the Zn(2+) pocket. Positions 304 and 306 each coordinate N-formimidoyl-L-glutamate. 4-imidazolone-5-propanoate is bound at residue Ser307.

Belongs to the metallo-dependent hydrolases superfamily. HutI family. Zn(2+) is required as a cofactor. The cofactor is Fe(3+).

It localises to the cytoplasm. It carries out the reaction 4-imidazolone-5-propanoate + H2O = N-formimidoyl-L-glutamate. Its pathway is amino-acid degradation; L-histidine degradation into L-glutamate; N-formimidoyl-L-glutamate from L-histidine: step 3/3. Catalyzes the hydrolytic cleavage of the carbon-nitrogen bond in imidazolone-5-propanoate to yield N-formimidoyl-L-glutamate. It is the third step in the universal histidine degradation pathway. The polypeptide is Imidazolonepropionase (Streptomyces griseus subsp. griseus (strain JCM 4626 / CBS 651.72 / NBRC 13350 / KCC S-0626 / ISP 5235)).